We begin with the raw amino-acid sequence, 451 residues long: Heme sensor protein HssS (451 aa).

Transmembrane regions (helical) follow at residues 9–29 (IAIY…LFTN) and 164–184 (IFLA…VIAS). Positions 186-238 (YSIIKPVTALKNATTRIMKGDFSTPIKQTRHDEIGTLQSRFNTMRQNLGQVDQ) constitute an HAMP domain. Residues 246-451 (NVSHEIKTPL…KTQFIVKLFI (206 aa)) enclose the Histidine kinase domain. Residue histidine 249 is modified to Phosphohistidine; by autocatalysis.

In terms of processing, autophosphorylated.

It localises to the cell membrane. The enzyme catalyses ATP + protein L-histidine = ADP + protein N-phospho-L-histidine.. Member of the two-component regulatory system HssS/HssR involved in intracellular heme homeostasis and tempering of staphylococcal virulence. HssS functions as a heme sensor histidine kinase which is autophosphorylated at a histidine residue and transfers its phosphate group to an aspartate residue of HssR. HssR/HssS activates the expression of HrtAB, an efflux pump, in response to extracellular heme, hemin, hemoglobin or blood. The protein is Heme sensor protein HssS (hssS) of Staphylococcus epidermidis (strain ATCC 12228 / FDA PCI 1200).